Here is a 331-residue protein sequence, read N- to C-terminus: Photosystem II assembly lipoprotein Ycf48 (331 aa).

An N-terminal signal peptide occupies residues 1–23 (MIPVIRSFLSLLLCVGLTFGLGG). Cysteine 24 is lipidated: N-palmitoyl cysteine. Cysteine 24 carries the S-diacylglycerol cysteine lipid modification.

This sequence belongs to the Ycf48 family. In terms of assembly, part of early PSII assembly complexes which includes D1 (psbA) and PsbI; not found in mature PSII. Binds to the lumenal side of PSII complexes. Interacts with YidC.

The protein resides in the cellular thylakoid membrane. In terms of biological role, a factor required for optimal assembly of photosystem II (PSII), acting in the early stages of PSII assembly. Also plays a role in replacement of photodamaged D1 (psbA). Assists YidC in synthesis of chlorophyll-binding proteins. The chain is Photosystem II assembly lipoprotein Ycf48 from Synechococcus sp. (strain RCC307).